The primary structure comprises 400 residues: Arabinan endo-1,5-alpha-L-arabinosidase B (400 aa).

The first 16 residues, 1–16, serve as a signal peptide directing secretion; the sequence is MAVIFVLFFLVSMALS. Asparagine 24 is a glycosylation site (N-linked (GlcNAc...) asparagine). Aspartate 70 functions as the Proton acceptor in the catalytic mechanism. N-linked (GlcNAc...) asparagine glycosylation is present at asparagine 184. The Proton donor role is filled by glutamate 277. Asparagine 372 is a glycosylation site (N-linked (GlcNAc...) asparagine).

The protein belongs to the glycosyl hydrolase 43 family.

It localises to the secreted. The enzyme catalyses Endohydrolysis of (1-&gt;5)-alpha-arabinofuranosidic linkages in (1-&gt;5)-arabinans.. Its pathway is glycan metabolism; L-arabinan degradation. Endo-1,5-alpha-L-arabinanase involved in degradation of pectin. Its preferred substrate is linear 1,5-alpha-L-arabinan. The sequence is that of Arabinan endo-1,5-alpha-L-arabinosidase B (abnB) from Emericella nidulans (strain FGSC A4 / ATCC 38163 / CBS 112.46 / NRRL 194 / M139) (Aspergillus nidulans).